Here is a 154-residue protein sequence, read N- to C-terminus: Ascorbate-specific PTS system EIIA component (154 aa).

The PTS EIIA type-2 domain occupies 6–150 (SLAENNSIRL…QEVLDLIDRT (145 aa)). His-68 acts as the Tele-phosphohistidine intermediate in catalysis. Phosphohistidine is present on His-68.

Its subcellular location is the cytoplasm. The phosphoenolpyruvate-dependent sugar phosphotransferase system (sugar PTS), a major carbohydrate active transport system, catalyzes the phosphorylation of incoming sugar substrates concomitantly with their translocation across the cell membrane. The enzyme II UlaABC PTS system is involved in ascorbate transport. This is Ascorbate-specific PTS system EIIA component (ulaC) from Salmonella paratyphi A (strain ATCC 9150 / SARB42).